The primary structure comprises 33 residues: Photosystem II reaction center protein Psb30 (33 aa).

The chain crosses the membrane as a helical span at residues 5–25 (IVFQLTALLFVVAAGPLVIVL).

Belongs to the Psb30/Ycf12 family. In terms of assembly, PSII is composed of 1 copy each of membrane proteins PsbA, PsbB, PsbC, PsbD, PsbE, PsbF, PsbH, PsbI, PsbJ, PsbK, PsbL, PsbM, PsbT, PsbX, PsbY, PsbZ, Psb30/Ycf12, peripheral proteins of the oxygen-evolving complex and a large number of cofactors. It forms dimeric complexes.

It is found in the plastid. The protein localises to the chloroplast thylakoid membrane. In terms of biological role, a core subunit of photosystem II (PSII), probably helps stabilize the reaction center. The chain is Photosystem II reaction center protein Psb30 from Chlorella vulgaris (Green alga).